The sequence spans 287 residues: MSNVTPKLVWPEDDYVDESLLEDHQGPARLEYDALVMLANLPPLTEEIMSRCPALPVKTRSTPEYTLVLDLDETLVHCSLTPLDNATMVFPVVFQNITYQVYVRLRPHLRTFLSRMAKTFEIIIFTASKKVYANKLCDILDPRKNHIRHRLFREHCVCVFGNYVKDLTILGRDPSKTMILDNAVQSFAYQLDNGIPIESWFHDRNDTELLKLCSFLEAIPTLGRDVREILRHKYRLRDHIPFYSIIHQQEGPGRLPLLEVAPPPVTEPNDEQLITQVVQKHPQLVQG.

Residues 60–219 (RSTPEYTLVL…LKLCSFLEAI (160 aa)) enclose the FCP1 homology domain.

The protein belongs to the CTDSPL2 family.

Probable phosphatase. In Caenorhabditis elegans, this protein is CTD small phosphatase-like protein 3 (scpl-3).